The following is a 222-amino-acid chain: ATP synthase F(0) complex subunit a (222 aa).

The next 6 membrane-spanning stretches (helical) occupy residues 8 to 28, 64 to 84, 93 to 113, 127 to 147, 160 to 180, and 197 to 219; these read FFYV…ILLP, WSLM…LGLL, QLTV…VPGF, QGTP…SLLI, ITAG…LSSI, and ILEL…LYLH.

The protein belongs to the ATPase A chain family. Component of the ATP synthase complex composed at least of ATP5F1A/subunit alpha, ATP5F1B/subunit beta, ATP5MC1/subunit c (homooctomer), MT-ATP6/subunit a, MT-ATP8/subunit 8, ATP5ME/subunit e, ATP5MF/subunit f, ATP5MG/subunit g, ATP5MK/subunit k, ATP5MJ/subunit j, ATP5F1C/subunit gamma, ATP5F1D/subunit delta, ATP5F1E/subunit epsilon, ATP5PF/subunit F6, ATP5PB/subunit b, ATP5PD/subunit d, ATP5PO/subunit OSCP. ATP synthase complex consists of a soluble F(1) head domain (subunits alpha(3) and beta(3)) - the catalytic core - and a membrane F(0) domain - the membrane proton channel (subunits c, a, 8, e, f, g, k and j). These two domains are linked by a central stalk (subunits gamma, delta, and epsilon) rotating inside the F1 region and a stationary peripheral stalk (subunits F6, b, d, and OSCP). Interacts with DNAJC30; interaction is direct.

It is found in the mitochondrion inner membrane. It carries out the reaction H(+)(in) = H(+)(out). In terms of biological role, subunit a, of the mitochondrial membrane ATP synthase complex (F(1)F(0) ATP synthase or Complex V) that produces ATP from ADP in the presence of a proton gradient across the membrane which is generated by electron transport complexes of the respiratory chain. ATP synthase complex consist of a soluble F(1) head domain - the catalytic core - and a membrane F(1) domain - the membrane proton channel. These two domains are linked by a central stalk rotating inside the F(1) region and a stationary peripheral stalk. During catalysis, ATP synthesis in the catalytic domain of F(1) is coupled via a rotary mechanism of the central stalk subunits to proton translocation. With the subunit c (ATP5MC1), forms the proton-conducting channel in the F(0) domain, that contains two crucial half-channels (inlet and outlet) that facilitate proton movement from the mitochondrial intermembrane space (IMS) into the matrix. Protons are taken up via the inlet half-channel and released through the outlet half-channel, following a Grotthuss mechanism. The chain is ATP synthase F(0) complex subunit a from Loxodonta africana (African elephant).